The following is a 732-amino-acid chain: Elongation factor 2 (732 aa).

Residues 19-260 enclose the tr-type G domain; it reads ERIRNMGIAA…MVVRHLPNPL (242 aa). GTP contacts are provided by residues 28 to 35, 94 to 98, and 148 to 151; these read AHIDHGKT, DTPGH, and NKVD. His-597 is subject to Diphthamide.

It belongs to the TRAFAC class translation factor GTPase superfamily. Classic translation factor GTPase family. EF-G/EF-2 subfamily.

Its subcellular location is the cytoplasm. In terms of biological role, catalyzes the GTP-dependent ribosomal translocation step during translation elongation. During this step, the ribosome changes from the pre-translocational (PRE) to the post-translocational (POST) state as the newly formed A-site-bound peptidyl-tRNA and P-site-bound deacylated tRNA move to the P and E sites, respectively. Catalyzes the coordinated movement of the two tRNA molecules, the mRNA and conformational changes in the ribosome. The chain is Elongation factor 2 from Thermococcus onnurineus (strain NA1).